A 119-amino-acid chain; its full sequence is Fluoride-specific ion channel FluC (119 aa).

4 helical membrane-spanning segments follow: residues I5–A25, L30–F50, W59–L79, and S92–L112. The Na(+) site is built by G69 and T72.

Belongs to the fluoride channel Fluc/FEX (TC 1.A.43) family.

Its subcellular location is the cell inner membrane. The catalysed reaction is fluoride(in) = fluoride(out). Na(+) is not transported, but it plays an essential structural role and its presence is essential for fluoride channel function. In terms of biological role, fluoride-specific ion channel. Important for reducing fluoride concentration in the cell, thus reducing its toxicity. This is Fluoride-specific ion channel FluC from Neisseria meningitidis serogroup A / serotype 4A (strain DSM 15465 / Z2491).